Here is a 565-residue protein sequence, read N- to C-terminus: Proline--tRNA ligase (565 aa).

The protein belongs to the class-II aminoacyl-tRNA synthetase family. ProS type 1 subfamily. In terms of assembly, homodimer.

The protein localises to the cytoplasm. It carries out the reaction tRNA(Pro) + L-proline + ATP = L-prolyl-tRNA(Pro) + AMP + diphosphate. Catalyzes the attachment of proline to tRNA(Pro) in a two-step reaction: proline is first activated by ATP to form Pro-AMP and then transferred to the acceptor end of tRNA(Pro). As ProRS can inadvertently accommodate and process non-cognate amino acids such as alanine and cysteine, to avoid such errors it has two additional distinct editing activities against alanine. One activity is designated as 'pretransfer' editing and involves the tRNA(Pro)-independent hydrolysis of activated Ala-AMP. The other activity is designated 'posttransfer' editing and involves deacylation of mischarged Ala-tRNA(Pro). The misacylated Cys-tRNA(Pro) is not edited by ProRS. This is Proline--tRNA ligase from Lactobacillus delbrueckii subsp. bulgaricus (strain ATCC 11842 / DSM 20081 / BCRC 10696 / JCM 1002 / NBRC 13953 / NCIMB 11778 / NCTC 12712 / WDCM 00102 / Lb 14).